A 327-amino-acid chain; its full sequence is Beta-ketoacyl-[acyl-carrier-protein] synthase III (327 aa).

Active-site residues include C114 and H254. The tract at residues 255-259 is ACP-binding; that stretch reads QANQR. N284 is an active-site residue.

Belongs to the thiolase-like superfamily. FabH family. In terms of assembly, homodimer.

Its subcellular location is the cytoplasm. It catalyses the reaction malonyl-[ACP] + acetyl-CoA + H(+) = 3-oxobutanoyl-[ACP] + CO2 + CoA. The protein operates within lipid metabolism; fatty acid biosynthesis. Functionally, catalyzes the condensation reaction of fatty acid synthesis by the addition to an acyl acceptor of two carbons from malonyl-ACP. Catalyzes the first condensation reaction which initiates fatty acid synthesis and may therefore play a role in governing the total rate of fatty acid production. Possesses both acetoacetyl-ACP synthase and acetyl transacylase activities. Its substrate specificity determines the biosynthesis of branched-chain and/or straight-chain of fatty acids. This chain is Beta-ketoacyl-[acyl-carrier-protein] synthase III, found in Levilactobacillus brevis (strain ATCC 367 / BCRC 12310 / CIP 105137 / JCM 1170 / LMG 11437 / NCIMB 947 / NCTC 947) (Lactobacillus brevis).